Reading from the N-terminus, the 67-residue chain is uncharacterized protein (67 aa).

This is an uncharacterized protein from Thermoproteus tenax virus 1 (strain KRA1) (TTV1).